Reading from the N-terminus, the 413-residue chain is Eukaryotic initiation factor 4A-8 (413 aa).

Positions 40–68 (DSFDAMGLQENLLRGIYAYGFEKPSAIQQ) match the Q motif motif. A Helicase ATP-binding domain is found at 71 to 241 (IVPFCKGLDV…RKFMNKPVRI (171 aa)). 84–91 (AQSGTGKT) serves as a coordination point for ATP. A DEAD box motif is present at residues 189 to 192 (DEAD). The Helicase C-terminal domain maps to 252–413 (GIKQFYVNVD…ELPSNVADLL (162 aa)).

Belongs to the DEAD box helicase family. eIF4A subfamily. In terms of assembly, eIF4F is a multi-subunit complex, the composition of which varies with external and internal environmental conditions. It is composed of at least EIF4A, EIF4E and EIF4G. As to expression, pollen specific.

The enzyme catalyses ATP + H2O = ADP + phosphate + H(+). In terms of biological role, ATP-dependent RNA helicase which is a subunit of the eIF4F complex involved in cap recognition and is required for mRNA binding to ribosome. In the current model of translation initiation, eIF4A unwinds RNA secondary structures in the 5'-UTR of mRNAs which is necessary to allow efficient binding of the small ribosomal subunit, and subsequent scanning for the initiator codon. The polypeptide is Eukaryotic initiation factor 4A-8 (Nicotiana tabacum (Common tobacco)).